The primary structure comprises 220 residues: N-(5'-phosphoribosyl)anthranilate isomerase (220 aa).

The protein belongs to the TrpF family.

It catalyses the reaction N-(5-phospho-beta-D-ribosyl)anthranilate = 1-(2-carboxyphenylamino)-1-deoxy-D-ribulose 5-phosphate. It participates in amino-acid biosynthesis; L-tryptophan biosynthesis; L-tryptophan from chorismate: step 3/5. The chain is N-(5'-phosphoribosyl)anthranilate isomerase from Gloeothece citriformis (strain PCC 7424) (Cyanothece sp. (strain PCC 7424)).